The primary structure comprises 262 residues: Phosphoribosyl 1,2-cyclic phosphate 1,2-diphosphodiesterase (262 aa).

Histidine 6, histidine 8, aspartate 13, histidine 38, glutamate 63, histidine 76, histidine 193, aspartate 245, and histidine 247 together coordinate Mn(2+).

The protein belongs to the PHP family. It depends on Mn(2+) as a cofactor.

The catalysed reaction is alpha-D-ribose 1,2-cyclic phosphate 5-phosphate + H2O = D-ribose 2,5-bisphosphate + H(+). The enzyme catalyses D-ribose 2,5-bisphosphate + H2O = D-ribose 5-phosphate + phosphate. Functionally, involved in degradation of methylphosphonate. Catalyzes the hydrolysis of the phosphate ester at carbon-1 of 5-phospho-D-ribose 1,2-cyclic phosphate to form ribose 2,5-bisphosphate. This intermediate is then hydrolyzed to ribose-5-phosphate and inorganic phosphate. The sequence is that of Phosphoribosyl 1,2-cyclic phosphate 1,2-diphosphodiesterase from Eggerthella lenta (strain ATCC 25559 / DSM 2243 / CCUG 17323 / JCM 9979 / KCTC 3265 / NCTC 11813 / VPI 0255 / 1899 B) (Eubacterium lentum).